The sequence spans 150 residues: D-aminoacyl-tRNA deacylase (150 aa).

The Gly-cisPro motif, important for rejection of L-amino acids motif lies at 138–139; the sequence is GP.

It belongs to the DTD family. Homodimer.

It is found in the cytoplasm. The catalysed reaction is glycyl-tRNA(Ala) + H2O = tRNA(Ala) + glycine + H(+). The enzyme catalyses a D-aminoacyl-tRNA + H2O = a tRNA + a D-alpha-amino acid + H(+). Its function is as follows. An aminoacyl-tRNA editing enzyme that deacylates mischarged D-aminoacyl-tRNAs. Also deacylates mischarged glycyl-tRNA(Ala), protecting cells against glycine mischarging by AlaRS. Acts via tRNA-based rather than protein-based catalysis; rejects L-amino acids rather than detecting D-amino acids in the active site. By recycling D-aminoacyl-tRNA to D-amino acids and free tRNA molecules, this enzyme counteracts the toxicity associated with the formation of D-aminoacyl-tRNA entities in vivo and helps enforce protein L-homochirality. The protein is D-aminoacyl-tRNA deacylase of Salinibacter ruber (strain DSM 13855 / M31).